A 783-amino-acid polypeptide reads, in one-letter code: Mitochondrial intermediate peptidase (783 aa).

A mitochondrion-targeting transit peptide spans 1 to 33; sequence MKAGIPLSRCTQRIPLLVARQVSRNITTTTTKF. His-565 lines the Zn(2+) pocket. Glu-566 is an active-site residue. Zn(2+) contacts are provided by His-569 and His-572.

It belongs to the peptidase M3 family. Requires Zn(2+) as cofactor.

It is found in the mitochondrion matrix. The enzyme catalyses Release of an N-terminal octapeptide as second stage of processing of some proteins imported into the mitochondrion.. Cleaves proteins, imported into the mitochondrion, to their mature size. While most mitochondrial precursor proteins are processed to the mature form in one step by mitochondrial processing peptidase (MPP), the sequential cleavage by MIP of an octapeptide after initial processing by MPP is a required step for a subgroup of nuclear-encoded precursor proteins destined for the matrix or the inner membrane. In Candida albicans (strain SC5314 / ATCC MYA-2876) (Yeast), this protein is Mitochondrial intermediate peptidase (OCT1).